Reading from the N-terminus, the 185-residue chain is C-phycoerythrin beta chain (185 aa).

Residues cysteine 49 and cysteine 60 each coordinate (2R,3E)-phycoerythrobilin. The residue at position 71 (asparagine 71) is an N4-methylasparagine. (2R,3E)-phycoerythrobilin is bound by residues cysteine 81 and cysteine 166.

The protein belongs to the phycobiliprotein family. In terms of assembly, heterodimer of an alpha and a beta chain. In terms of processing, contains three covalently linked bilin chromophores.

It is found in the cellular thylakoid membrane. Light-harvesting photosynthetic bile pigment-protein from the phycobiliprotein complex. This Pseudanabaena tenuis (strain PCC 7409) protein is C-phycoerythrin beta chain (cpeB).